The chain runs to 105 residues: Thioredoxin (105 aa).

In terms of domain architecture, Thioredoxin spans 2-105 (VKQIDSKDAF…KLEATINEFV (104 aa)). Residue lysine 3 is modified to N6-acetyllysine. The residue at position 8 (lysine 8) is an N6-succinyllysine. Active-site nucleophile residues include cysteine 32 and cysteine 35. Cysteine 32 and cysteine 35 form a disulfide bridge. Lysine 39 bears the N6-acetyllysine mark. An S-nitrosocysteine mark is found at cysteine 62 and cysteine 69. Position 73 is an S-nitrosocysteine; alternate (cysteine 73). Position 94 is an N6-acetyllysine; alternate (lysine 94). N6-succinyllysine; alternate is present on lysine 94.

The protein belongs to the thioredoxin family. As to quaternary structure, homodimer; disulfide-linked. Interacts with TXNIP through the redox-active site. Interacts with MAP3K5 and CASP3. Interacts with APEX1; the interaction stimulates the FOS/JUN AP-1 DNA-binding activity in a redox-dependent manner. In the fully reduced protein, both Cys-69 and Cys-73 are nitrosylated in response to nitric oxide (NO). When two disulfide bonds are present in the protein, only Cys-73 is nitrosylated. Cys-73 can serve as donor for nitrosylation of target proteins.

Its subcellular location is the nucleus. It localises to the cytoplasm. The protein localises to the secreted. Participates in various redox reactions through the reversible oxidation of its active center dithiol to a disulfide and catalyzes dithiol-disulfide exchange reactions. Plays a role in the reversible S-nitrosylation of cysteine residues in target proteins, and thereby contributes to the response to intracellular nitric oxide. Nitrosylates the active site Cys of CASP3 in response to nitric oxide (NO), and thereby inhibits caspase-3 activity. Induces the FOS/JUN AP-1 DNA binding activity in ionizing radiation (IR) cells through its oxidation/reduction status and stimulates AP-1 transcriptional activity. The sequence is that of Thioredoxin (TXN) from Callithrix jacchus (White-tufted-ear marmoset).